The following is a 362-amino-acid chain: MGAMAPRTLLLLLAAALAPTQTRAGPHSMRYFETAVSRPGLGEPRYISVGYVDNKEFVRFDSDAENPRYEPQAPWMEQEGPEYWERITQIAKGQEQWFRVNLRTLLGYYNQSAGGTHTLQWMYGCDVGSDGRLLRGYEQFAYDGCDYIALNEDLKTWTAADMAAQITRRKWEQAGAAEYYRAYLEGECVEWLHRYLKNGNATLLRTDSPKAHVTHHPRSKGEVTLRCWALGFYPADITLTWQLNGEELTQDMELVETRPAGDGTFQKWASVVVPLGKEQNYTCRVYHEGLPEPLTLRWEPPPSTDSYMVIVAVLGVLGAMAIIGAVVAFVMKRRRNTGGKGGDYALAPGSQSSEMSLRDCKA.

An N-terminal signal peptide occupies residues 1–24; the sequence is MGAMAPRTLLLLLAAALAPTQTRA. The interval 25-114 is alpha-1; sequence GPHSMRYFET…LLGYYNQSAG (90 aa). At 25 to 309 the chain is on the extracellular side; the sequence is GPHSMRYFET…PPPSTDSYMV (285 aa). The N-linked (GlcNAc...) asparagine glycan is linked to asparagine 110. Positions 115–206 are alpha-2; the sequence is GTHTLQWMYG…KNGNATLLRT (92 aa). A disulfide bridge links cysteine 125 with cysteine 188. Asparagine 200 and asparagine 280 each carry an N-linked (GlcNAc...) asparagine glycan. An alpha-3 region spans residues 207–298; that stretch reads DSPKAHVTHH…GLPEPLTLRW (92 aa). In terms of domain architecture, Ig-like C1-type spans 209 to 297; it reads PKAHVTHHPR…EGLPEPLTLR (89 aa). A disulfide bond links cysteine 227 and cysteine 283. The interval 299–309 is connecting peptide; it reads EPPPSTDSYMV. A helical membrane pass occupies residues 310 to 331; that stretch reads IVAVLGVLGAMAIIGAVVAFVM. The Cytoplasmic segment spans residues 332 to 362; sequence KRRRNTGGKGGDYALAPGSQSSEMSLRDCKA. The tract at residues 340–362 is disordered; that stretch reads KGGDYALAPGSQSSEMSLRDCKA. Phosphoserine is present on residues serine 353 and serine 356.

The protein belongs to the MHC class I family. In terms of assembly, heterodimer of an alpha chain and a beta chain (beta-2-microglobulin).

It localises to the membrane. Functionally, involved in the presentation of foreign antigens to the immune system. This Mus musculus (Mouse) protein is H-2 class I histocompatibility antigen, L-D alpha chain (H2-L).